Here is a 138-residue protein sequence, read N- to C-terminus: ATP synthase epsilon chain (138 aa).

The protein belongs to the ATPase epsilon chain family. In terms of assembly, F-type ATPases have 2 components, CF(1) - the catalytic core - and CF(0) - the membrane proton channel. CF(1) has five subunits: alpha(3), beta(3), gamma(1), delta(1), epsilon(1). CF(0) has three main subunits: a, b and c.

It localises to the cell inner membrane. In terms of biological role, produces ATP from ADP in the presence of a proton gradient across the membrane. This Ruthia magnifica subsp. Calyptogena magnifica protein is ATP synthase epsilon chain.